The following is a 399-amino-acid chain: MAKEKFVKTKPHVNIGTIGHVDHGKTTLTAAITAVLAEKGYAEKRDYDQIDNAPEERERGITIATSHVEYETDKRHYAHVDCPGHADYVKNMITGAAQMDGAILVVSAADGPMPQTREHILLARQVGVPYIVVFLNKEDMVDDPELLELVEMEVRELLNEYDFPGDDVPVIAGSALKALEEAKEGKLGEWSEKILKLMEAVDEYIPTPERDIDKPFLMPIEDVFSISGRGTVVTGRIERGVVKVGDEIEIVGLRPTQKTTVTGVEMFRKELDQGEAGDNVGVLLRGTKKEEVERGQVLAQPGTITPHTKFEAEIYVLTKEEGGRHTPFFSGYRPQFYVRTTDVTGTITLPEGVEMVMPGDNVKINAELIAPIALEEGTRFAIREGGRTVGAGVVSKIIE.

The tr-type G domain occupies 10–209; the sequence is KPHVNIGTIG…AVDEYIPTPE (200 aa). A G1 region spans residues 19-26; it reads GHVDHGKT. Residue 19–26 participates in GTP binding; sequence GHVDHGKT. Thr-26 lines the Mg(2+) pocket. The tract at residues 60–64 is G2; it reads GITIA. The tract at residues 81-84 is G3; it reads DCPG. Residues 81–85 and 136–139 each bind GTP; these read DCPGH and NKED. Residues 136–139 form a G4 region; that stretch reads NKED. Residues 174–176 are G5; that stretch reads SAL.

This sequence belongs to the TRAFAC class translation factor GTPase superfamily. Classic translation factor GTPase family. EF-Tu/EF-1A subfamily. In terms of assembly, monomer.

The protein resides in the cytoplasm. The catalysed reaction is GTP + H2O = GDP + phosphate + H(+). In terms of biological role, GTP hydrolase that promotes the GTP-dependent binding of aminoacyl-tRNA to the A-site of ribosomes during protein biosynthesis. This chain is Elongation factor Tu, found in Nitratiruptor sp. (strain SB155-2).